The primary structure comprises 859 residues: Low-density lipoprotein receptor-related protein 12 (859 aa).

The N-terminal stretch at 1–32 (MACRWSTKESPRWRSALLLLFLAGVYGNGALA) is a signal peptide. Over 33-492 (EHSENVHISG…ENCPVIVPTR (460 aa)) the chain is Extracellular. 2 disulfide bridges follow: Cys47–Cys76 and Cys103–Cys122. One can recognise a CUB 1 domain in the interval 47–159 (CGETPEQIRA…KGFRLAYFSG (113 aa)). N-linked (GlcNAc...) asparagine glycosylation occurs at Asn75. Residue Asn146 is glycosylated (N-linked (GlcNAc...) asparagine). LDL-receptor class A domains lie at 165-201 (NCAC…EICA) and 214-255 (PCAY…IDCD). Cystine bridges form between Cys166-Cys178, Cys173-Cys191, Cys185-Cys200, Cys215-Cys232, Cys222-Cys245, Cys239-Cys254, and Cys259-Cys285. The CUB 2 domain maps to 259-372 (CGQWLKYFYG…RGFNATYQVD (114 aa)). N-linked (GlcNAc...) asparagine glycans are attached at residues Asn284 and Asn366. LDL-receptor class A domains are found at residues 374–411 (FCLP…TNCT), 412–449 (MCQK…KNCF), and 450–486 (FCQP…ENCP). 9 disulfide bridges follow: Cys375–Cys388, Cys382–Cys401, Cys395–Cys410, Cys413–Cys426, Cys420–Cys439, Cys433–Cys448, Cys451–Cys463, Cys458–Cys476, and Cys470–Cys485. Residue Asn409 is glycosylated (N-linked (GlcNAc...) asparagine). Asn441 carries N-linked (GlcNAc...) asparagine glycosylation. The helical transmembrane segment at 493-513 (VITAAVIGSLICGLLLVIALG) threads the bilayer. Over 514–859 (CTCKLYSLRM…TSDDEALLLC (346 aa)) the chain is Cytoplasmic. Disordered stretches follow at residues 623 to 678 (ADGD…LPQK), 693 to 723 (ASSS…SPAR), 748 to 770 (SSLS…REDD), and 801 to 823 (DQGQ…SNRD). 2 stretches are compositionally biased toward polar residues: residues 748–757 (SSLSQNQSPL) and 801–814 (DQGQ…NATN).

Belongs to the LDLR family. As to quaternary structure, may interact with RACK1, ZFYVE9 and NMRK2. As to expression, widely expressed in heart, skeletal muscle, brain, lung, placenta and pancreas, but not in tissues consisting of a large number of epithelial cells, such as liver and kidney. Expressed at very low levels in a number of tumor-derived cell lines.

It is found in the membrane. It localises to the coated pit. In terms of biological role, probable receptor, which may be involved in the internalization of lipophilic molecules and/or signal transduction. May act as a tumor suppressor. The sequence is that of Low-density lipoprotein receptor-related protein 12 (LRP12) from Homo sapiens (Human).